Here is a 224-residue protein sequence, read N- to C-terminus: UPF0173 metal-dependent hydrolase TON_1314 (224 aa).

This sequence belongs to the UPF0173 family.

This Thermococcus onnurineus (strain NA1) protein is UPF0173 metal-dependent hydrolase TON_1314.